A 71-amino-acid polypeptide reads, in one-letter code: Translation initiation factor IF-1 (71 aa).

The region spanning 1–71 is the S1-like domain; the sequence is MSKDDLIQFT…LTKGRVIHRH (71 aa).

The protein belongs to the IF-1 family. As to quaternary structure, component of the 30S ribosomal translation pre-initiation complex which assembles on the 30S ribosome in the order IF-2 and IF-3, IF-1 and N-formylmethionyl-tRNA(fMet); mRNA recruitment can occur at any time during PIC assembly.

It localises to the cytoplasm. Functionally, one of the essential components for the initiation of protein synthesis. Stabilizes the binding of IF-2 and IF-3 on the 30S subunit to which N-formylmethionyl-tRNA(fMet) subsequently binds. Helps modulate mRNA selection, yielding the 30S pre-initiation complex (PIC). Upon addition of the 50S ribosomal subunit IF-1, IF-2 and IF-3 are released leaving the mature 70S translation initiation complex. The chain is Translation initiation factor IF-1 from Rickettsia typhi (strain ATCC VR-144 / Wilmington).